Consider the following 155-residue polypeptide: Ribosomal RNA large subunit methyltransferase H (155 aa).

Residues leucine 73, glycine 104, and 123-128 each bind S-adenosyl-L-methionine; that span reads LSPLTL.

The protein belongs to the RNA methyltransferase RlmH family. In terms of assembly, homodimer.

The protein resides in the cytoplasm. It catalyses the reaction pseudouridine(1915) in 23S rRNA + S-adenosyl-L-methionine = N(3)-methylpseudouridine(1915) in 23S rRNA + S-adenosyl-L-homocysteine + H(+). Its function is as follows. Specifically methylates the pseudouridine at position 1915 (m3Psi1915) in 23S rRNA. The chain is Ribosomal RNA large subunit methyltransferase H from Stutzerimonas stutzeri (strain A1501) (Pseudomonas stutzeri).